The primary structure comprises 122 residues: Large ribosomal subunit protein uL14 (122 aa).

Belongs to the universal ribosomal protein uL14 family. Part of the 50S ribosomal subunit. Forms a cluster with proteins L3 and L19. In the 70S ribosome, L14 and L19 interact and together make contacts with the 16S rRNA in bridges B5 and B8.

In terms of biological role, binds to 23S rRNA. Forms part of two intersubunit bridges in the 70S ribosome. The protein is Large ribosomal subunit protein uL14 of Trichormus variabilis (strain ATCC 29413 / PCC 7937) (Anabaena variabilis).